The chain runs to 527 residues: Probable protein kinase UbiB (527 aa).

Residues 118–501 (DFERVPVASA…QKRTNRLLQG (384 aa)) form the Protein kinase domain. Residues 124–132 (VASASIAQV) and Lys150 each bind ATP. Asp285 (proton acceptor) is an active-site residue. Residues 502–522 (LLMFGVAVGVGAVLARAWLAI) form a helical membrane-spanning segment.

Belongs to the ABC1 family. UbiB subfamily.

Its subcellular location is the cell inner membrane. Its pathway is cofactor biosynthesis; ubiquinone biosynthesis [regulation]. Functionally, is probably a protein kinase regulator of UbiI activity which is involved in aerobic coenzyme Q (ubiquinone) biosynthesis. In Paraburkholderia phymatum (strain DSM 17167 / CIP 108236 / LMG 21445 / STM815) (Burkholderia phymatum), this protein is Probable protein kinase UbiB.